The primary structure comprises 444 residues: Homocysteine/cysteine synthase (444 aa).

At K208 the chain carries N6-(pyridoxal phosphate)lysine.

This sequence belongs to the trans-sulfuration enzymes family. Homotetramer. It depends on pyridoxal 5'-phosphate as a cofactor.

Its subcellular location is the cytoplasm. It catalyses the reaction O-acetyl-L-homoserine + methanethiol = L-methionine + acetate + H(+). The enzyme catalyses O-acetyl-L-homoserine + hydrogen sulfide = L-homocysteine + acetate. It carries out the reaction O-acetyl-L-serine + hydrogen sulfide = L-cysteine + acetate. It functions in the pathway amino-acid biosynthesis; L-methionine biosynthesis via de novo pathway; L-homocysteine from O-acetyl-L-homoserine. It participates in amino-acid biosynthesis; L-cysteine biosynthesis; L-cysteine from L-serine: step 2/2. Its function is as follows. Catalyzes the conversion of O-acetyl-L-homoserine (OAH) into homocysteine in the methionine biosynthesis pathway. Also catalyzes the conversion of O-acetylserine (OAS) into cysteine, the last step in the cysteine biosynthesis pathway. The protein is Homocysteine/cysteine synthase (MET17) of Kluyveromyces lactis (strain ATCC 8585 / CBS 2359 / DSM 70799 / NBRC 1267 / NRRL Y-1140 / WM37) (Yeast).